Reading from the N-terminus, the 114-residue chain is Flagellar hook-basal body complex protein FliE (114 aa).

The protein belongs to the FliE family.

The protein resides in the bacterial flagellum basal body. The polypeptide is Flagellar hook-basal body complex protein FliE (Desulfitobacterium hafniense (strain DSM 10664 / DCB-2)).